Here is a 293-residue protein sequence, read N- to C-terminus: GTPase Era (293 aa).

The Era-type G domain occupies 5–174 (RTISVCIIGR…ITGKAQIAPW (170 aa)). Residues 13 to 20 (GRPNSGKS) are G1. A GTP-binding site is contributed by 13–20 (GRPNSGKS). The interval 39–43 (QTTRS) is G2. The interval 60-63 (DTPG) is G3. GTP-binding positions include 60 to 64 (DTPGI) and 122 to 125 (NKID). The interval 122–125 (NKID) is G4. The tract at residues 150–152 (ISA) is G5. The 78-residue stretch at 202–279 (LQQELPYKLT…HLFLFVKVHE (78 aa)) folds into the KH type-2 domain.

The protein belongs to the TRAFAC class TrmE-Era-EngA-EngB-Septin-like GTPase superfamily. Era GTPase family. In terms of assembly, monomer.

The protein localises to the cytoplasm. It is found in the cell inner membrane. Functionally, an essential GTPase that binds both GDP and GTP, with rapid nucleotide exchange. Plays a role in 16S rRNA processing and 30S ribosomal subunit biogenesis and possibly also in cell cycle regulation and energy metabolism. The polypeptide is GTPase Era (Rickettsia akari (strain Hartford)).